We begin with the raw amino-acid sequence, 90 residues long: uncharacterized protein (90 aa).

The chain crosses the membrane as a helical span at residues 69-89 (LLYIFLGAMIVIIFLVIKNQL).

This sequence belongs to the IIV-6 466R family.

It is found in the membrane. This is an uncharacterized protein from Invertebrate iridescent virus 6 (IIV-6).